Reading from the N-terminus, the 307-residue chain is Elongation factor Ts (307 aa).

Residues 80–83 (TDFV) are involved in Mg(2+) ion dislocation from EF-Tu.

It belongs to the EF-Ts family.

The protein resides in the cytoplasm. In terms of biological role, associates with the EF-Tu.GDP complex and induces the exchange of GDP to GTP. It remains bound to the aminoacyl-tRNA.EF-Tu.GTP complex up to the GTP hydrolysis stage on the ribosome. In Rhizorhabdus wittichii (strain DSM 6014 / CCUG 31198 / JCM 15750 / NBRC 105917 / EY 4224 / RW1) (Sphingomonas wittichii), this protein is Elongation factor Ts.